A 614-amino-acid chain; its full sequence is MRLLLIHSDYIEYEAKKKTKMAEEGAVLSDREEDALTVFTAVESVDEEDTEGVILQAIEEVKKTAGQVHAEKIVIYPYAHLSSDLARPELAVPALNALRDGLAAEGFAVKRAPFGWYKSFKISCKGHPLSELSKTIVPGEEGEVVSKKLGKKEATHDWFVMTPDGKTHDYHKYLDNTPFGCLVKKELGVAEPTGGEPAHVDLMRSKELVDYEPASDVGCMRWMPKGKLIRDLMADYVLALLLPYGATPVETPVMYDLGDKAIYEHADKFGERQYRFKSNNRDMMLRFAACFGMFSIMRDMHISKNTLPMKMYELSTYSFRHEQKGEVIGLKRLRCFTMPDMHSLCTDMPEAMKCFEEQLAIGWQTGRDFETKLVAAFRCTKKFYDENEAWVKKIVKESDCPMLIEILSERVHYWEAKIDLAAIDGQNRPIENPTVQIDVESSTRFNIKYFKDDGTPVYPPILHCSPTGSVERVICAILENISTQKVPALPTWLSPVQARVVPVAERHTAYAQEICDALNAQGIRCDLDERDESVGKKVREAGMDWVPYVIVIGDEEMASKKLTVTIRRKSEPNKPFKEQMTTDALAATIKNETAGKPFRPLYTPRKLSLKARYI.

Residues 1–141 (MRLLLIHSDY…LSKTIVPGEE (141 aa)) are editing domain. The interval 198–490 (AHVDLMRSKE…ISTQKVPALP (293 aa)) is catalytic. Residues C290, H342, and H463 each contribute to the Zn(2+) site.

This sequence belongs to the class-II aminoacyl-tRNA synthetase family. As to quaternary structure, homodimer. Zn(2+) is required as a cofactor.

The protein resides in the cytoplasm. The catalysed reaction is tRNA(Thr) + L-threonine + ATP = L-threonyl-tRNA(Thr) + AMP + diphosphate + H(+). Catalyzes the attachment of threonine to tRNA(Thr) in a two-step reaction: L-threonine is first activated by ATP to form Thr-AMP and then transferred to the acceptor end of tRNA(Thr). Also edits incorrectly charged L-seryl-tRNA(Thr). The chain is Threonine--tRNA ligase from Methanoregula boonei (strain DSM 21154 / JCM 14090 / 6A8).